Consider the following 500-residue polypeptide: MSIVDVRTPDPKRFIPGATGDWEVIIGLEVHAQVLSNSKLFSGASTEFGNAPNANVSLVDAAMPGMLPVINEECVKQAVRTGLGLKAKINRRSIFDRKNYFYPDLPQGYQISQYKDPIVGEGKIIISIGPDRQGQFEDVEIGIERLHLEQDAGKSMHDQHPSMSYVDLNRSGVALMEIVSKPDLRSSDEAKAYLTKLRSILRYLGTCDGNMDEGSMRADVNVSVRRPGAAFGTRCEIKNVNSIRFVGQAIEYEARRQIGILEDGGTIDQETRLFDPNKGETRSMRSKEDAHDYRYFPDPDLLPLEFDDAFVEALKTDLPELPDDKKDRFVRDLGLSVYDASVLVSEKAIADYFEAVAEGRDGKIAANWVINDLLGALNKAGKTIEETPVSPAQLGGVIDLIKAGTISGKLAKDLFEILWNEGGDPAEIVESRGMKQVTDTGAIEKAVDEIIAANPDQVEKAKAKPSLAGWFVGQVMKATGGKANPQAVQALVKSKLGIEE.

The protein belongs to the GatB/GatE family. GatB subfamily. As to quaternary structure, heterotrimer of A, B and C subunits.

The catalysed reaction is L-glutamyl-tRNA(Gln) + L-glutamine + ATP + H2O = L-glutaminyl-tRNA(Gln) + L-glutamate + ADP + phosphate + H(+). The enzyme catalyses L-aspartyl-tRNA(Asn) + L-glutamine + ATP + H2O = L-asparaginyl-tRNA(Asn) + L-glutamate + ADP + phosphate + 2 H(+). Functionally, allows the formation of correctly charged Asn-tRNA(Asn) or Gln-tRNA(Gln) through the transamidation of misacylated Asp-tRNA(Asn) or Glu-tRNA(Gln) in organisms which lack either or both of asparaginyl-tRNA or glutaminyl-tRNA synthetases. The reaction takes place in the presence of glutamine and ATP through an activated phospho-Asp-tRNA(Asn) or phospho-Glu-tRNA(Gln). The sequence is that of Aspartyl/glutamyl-tRNA(Asn/Gln) amidotransferase subunit B from Sinorhizobium fredii (strain NBRC 101917 / NGR234).